The primary structure comprises 290 residues: 33 kDa chaperonin (290 aa).

Disulfide bonds link Cys235-Cys237 and Cys268-Cys271.

It belongs to the HSP33 family. Post-translationally, under oxidizing conditions two disulfide bonds are formed involving the reactive cysteines. Under reducing conditions zinc is bound to the reactive cysteines and the protein is inactive.

It is found in the cytoplasm. Functionally, redox regulated molecular chaperone. Protects both thermally unfolding and oxidatively damaged proteins from irreversible aggregation. Plays an important role in the bacterial defense system toward oxidative stress. This chain is 33 kDa chaperonin, found in Streptococcus equi subsp. zooepidemicus (strain MGCS10565).